The chain runs to 253 residues: Ribosome maturation factor RimP (253 aa).

Positions 186–199 (RRGKAAEREKKRDL) are enriched in basic and acidic residues. Positions 186-253 (RRGKAAEREK…RARRGEIDPD (68 aa)) are disordered. The span at 201–216 (LAPPLAPHAKPAAQAK) shows a compositional bias: low complexity. The span at 240 to 253 (LAADRARRGEIDPD) shows a compositional bias: basic and acidic residues.

This sequence belongs to the RimP family.

It is found in the cytoplasm. Required for maturation of 30S ribosomal subunits. This Bradyrhizobium sp. (strain BTAi1 / ATCC BAA-1182) protein is Ribosome maturation factor RimP.